A 122-amino-acid polypeptide reads, in one-letter code: Large ribosomal subunit protein uL14 (122 aa).

Belongs to the universal ribosomal protein uL14 family. Part of the 50S ribosomal subunit. Forms a cluster with proteins L3 and L19. In the 70S ribosome, L14 and L19 interact and together make contacts with the 16S rRNA in bridges B5 and B8.

Its function is as follows. Binds to 23S rRNA. Forms part of two intersubunit bridges in the 70S ribosome. The polypeptide is Large ribosomal subunit protein uL14 (Thioalkalivibrio sulfidiphilus (strain HL-EbGR7)).